The sequence spans 93 residues: Class II hydrophobin 1 (93 aa).

The signal sequence occupies residues 1-16 (MKFFAVAALFVASAMA). Intrachain disulfides connect Cys24-Cys74, Cys35-Cys65, Cys36-Cys48, and Cys75-Cys86.

It belongs to the cerato-ulmin hydrophobin family. In terms of assembly, interacts with maize ubiquilin 1-like (UBL) protein. Homotetramer. Further self-assembles to form highly ordered films at water-air interfaces through intermolecular interactions.

The protein localises to the cell membrane. Functionally, aerial growth, conidiation, and dispersal of filamentous fungi in the environment rely upon a capability of their secreting small amphipathic proteins called hydrophobins (HPBs) with low sequence identity. Class I can self-assemble into an outermost layer of rodlet bundles on aerial cell surfaces, conferring cellular hydrophobicity that supports fungal growth, development and dispersal; whereas Class II form highly ordered films at water-air interfaces through intermolecular interactions but contribute nothing to the rodlet structure. Hyd1 is a class II hydrophobin that acts as an elicitor of induced systemic resistance (ISR) in plants. During interaction with the plant, binds with the maize target protein UBL in order to recruit more UBL proteins in maize roots to elicit plant defense responses, including cell death as well as brassinosteroid, jasmonate (JA) and ethylene (ET) signaling. The polypeptide is Class II hydrophobin 1 (Trichoderma harzianum (Hypocrea lixii)).